We begin with the raw amino-acid sequence, 110 residues long: Probable ribonuclease HepT (110 aa).

Residues R75 and H80 contribute to the active site. Residues 75-82 (RDKLIHAY) carry the RX(4)HXY motif motif. O-di-AMP-tyrosine is present on Y82.

This sequence belongs to the HepT RNase toxin family. In terms of processing, modified by cognate antitoxin MntA; probably at least 2 successive AMPylation events occur on Tyr-82.

Toxic component of a type VII toxin-antitoxin (TA) system. Overexpression in E.coli inhibits cell growth. Neutralized by cognate antitoxin MntA. Neutralization is probably due to AMPylation by MntA. Probably an RNAase. This chain is Probable ribonuclease HepT, found in Thermococcus cleftensis (strain DSM 27260 / KACC 17922 / CL1).